Here is a 645-residue protein sequence, read N- to C-terminus: E3 ubiquitin-protein ligase ORTHRUS 2 (645 aa).

Residues 12 to 63 (DGVCMRCKSNPPPEESLTCGTCVTPWHVSCLSSPPKTLASTLQWHCPDCSGE) form a PHD-type zinc finger. The tract at residues 96 to 133 (LSTEEKAKMRQRLLSGKGVEEDDEEEKRKKKGKGKNPN) is disordered. An RING-type 1 zinc finger spans residues 146–185 (CSFCMQLPERPVTKPCGHNACLKCFEKWMGQGKRTCGKCR). Residues 273 to 422 (VRNQGLLVGE…FKVCRYLFVR (150 aa)) form the YDG domain. Residues 518–575 (CQICQQVLTLPVTTPCAHNFCKACLEAKFAGKTLVRERSTGGRTLRSRKNVLNCPCCP) form an RING-type 2 zinc finger. Residues 583 to 613 (QNPQVNREVAEVIEKLKTQEEDTAELEDEDE) adopt a coiled-coil conformation. Residues 599-645 (KTQEEDTAELEDEDEGECSGTTPEEDSEQPKKRIKLDTDATVSATIR) form a disordered region. The segment covering 603–625 (EDTAELEDEDEGECSGTTPEEDS) has biased composition (acidic residues). Residues 626-636 (EQPKKRIKLDT) are compositionally biased toward basic and acidic residues.

Interacts with histones CENH3, HTB2, HTR3 and H4. As to expression, mostly expressed in inflorescence and, to a lower extent, in leaves.

The protein localises to the nucleus. It carries out the reaction S-ubiquitinyl-[E2 ubiquitin-conjugating enzyme]-L-cysteine + [acceptor protein]-L-lysine = [E2 ubiquitin-conjugating enzyme]-L-cysteine + N(6)-ubiquitinyl-[acceptor protein]-L-lysine.. It functions in the pathway protein modification; protein ubiquitination. E3 ubiquitin-protein ligase. Participates in CpG methylation-dependent transcriptional regulation and epigenetic transcriptional silencing. Mediates ubiquitination with the E2 ubiquitin-conjugating enzyme UBC11. Promotes methylation-mediated gene silencing leading, for example, to early flowering. Associates with methylated DNA, and can bind to CpG, CpNpG, and CpNpN DNA motifs, with a strong preference for methylated forms, and with highest affinity for CpG substrate. Probably acts at the DNA methylation?histone interface to maintain centromeric heterochromatin. The chain is E3 ubiquitin-protein ligase ORTHRUS 2 (ORTH2) from Arabidopsis thaliana (Mouse-ear cress).